The primary structure comprises 722 residues: Probable carboxypeptidase X1 (722 aa).

The N-terminal stretch at Met-1–Gly-20 is a signal peptide. The tract at residues Ala-30–Arg-54 is disordered. Polar residues predominate over residues Ala-36 to Asn-49. N-linked (GlcNAc...) asparagine glycosylation is found at Asn-49, Asn-200, Asn-210, and Asn-307. One can recognise an F5/8 type C domain in the interval Pro-103 to Cys-263. Cys-105 and Cys-263 are disulfide-bonded. Positions Arg-287–Val-610 constitute a Peptidase M14 domain. Residues His-349 and Glu-352 each coordinate Zn(2+). A glycan (N-linked (GlcNAc...) asparagine) is linked at Asn-461. His-487 contributes to the Zn(2+) binding site. The Proton donor/acceptor role is filled by Glu-580.

This sequence belongs to the peptidase M14 family. Zn(2+) serves as cofactor. Strongly expressed in testis and spleen. Moderately expressed in salivary gland, brain, heart, lung, and kidney. Extremely low expression in liver and muscle. No expression in eye, adrenal, and white adipose tissues.

It is found in the secreted. In terms of biological role, may be involved in cell-cell interactions. No carboxypeptidase activity was found yet. The polypeptide is Probable carboxypeptidase X1 (Cpxm1) (Mus musculus (Mouse)).